A 464-amino-acid chain; its full sequence is Fumarate hydratase class II (464 aa).

Residues 98–100, 129–132, 139–141, and Thr-187 contribute to the substrate site; these read SGT, HPND, and SSN. His-188 serves as the catalytic Proton donor/acceptor. Residue Ser-318 is part of the active site. Substrate contacts are provided by residues Ser-319 and 324–326; that span reads KVN.

The protein belongs to the class-II fumarase/aspartase family. Fumarase subfamily. Homotetramer.

It localises to the cytoplasm. It carries out the reaction (S)-malate = fumarate + H2O. It participates in carbohydrate metabolism; tricarboxylic acid cycle; (S)-malate from fumarate: step 1/1. Functionally, involved in the TCA cycle. Catalyzes the stereospecific interconversion of fumarate to L-malate. The protein is Fumarate hydratase class II of Haemophilus ducreyi (strain 35000HP / ATCC 700724).